We begin with the raw amino-acid sequence, 432 residues long: Gamma-glutamyl phosphate reductase (432 aa).

It belongs to the gamma-glutamyl phosphate reductase family.

Its subcellular location is the cytoplasm. It catalyses the reaction L-glutamate 5-semialdehyde + phosphate + NADP(+) = L-glutamyl 5-phosphate + NADPH + H(+). Its pathway is amino-acid biosynthesis; L-proline biosynthesis; L-glutamate 5-semialdehyde from L-glutamate: step 2/2. Catalyzes the NADPH-dependent reduction of L-glutamate 5-phosphate into L-glutamate 5-semialdehyde and phosphate. The product spontaneously undergoes cyclization to form 1-pyrroline-5-carboxylate. This is Gamma-glutamyl phosphate reductase from Kineococcus radiotolerans (strain ATCC BAA-149 / DSM 14245 / SRS30216).